We begin with the raw amino-acid sequence, 661 residues long: Phospholipid:diacylglycerol acyltransferase (661 aa).

The disordered stretch occupies residues 1–71; sequence MGTLFRRNVQ…FDRKRDGNGR (71 aa). The Cytoplasmic portion of the chain corresponds to 1-80; the sequence is MGTLFRRNVQ…RKRWRDSRRL (80 aa). Positions 34–48 are enriched in basic residues; it reads HIHHQQGLGHKRRRG. Short sequence motifs (bipartite nuclear localization signal) lie at residues 43 to 50 and 64 to 71; these read HKRRRGIS and RKRDGNGR. Over residues 54-70 the composition is skewed to basic and acidic residues; sequence KRNERGKDFDRKRDGNG. The chain crosses the membrane as a helical span at residues 81 to 101; the sequence is IFILGAFLGVLLPFSFGAYHV. Residues 102–661 are Lumenal-facing; it reads HNSDSDLFDN…QWVSQMPFPM (560 aa). Gln-162 provides a ligand contact to substrate. Positions 322–326 match the GHSXG lipase motif motif; the sequence is GHSMG. The active-site Acyl-ester intermediate is the Ser-324. Substrate is bound at residue Met-325. N-linked (GlcNAc...) asparagine glycosylation is found at Asn-453, Asn-461, and Asn-469. Residue Asp-567 is the Charge relay system of the active site. Asn-594 is a glycosylation site (N-linked (GlcNAc...) asparagine). His-618 (charge relay system) is an active-site residue.

This sequence belongs to the AB hydrolase superfamily. Lipase family.

The protein resides in the endoplasmic reticulum membrane. It is found in the nucleus inner membrane. The catalysed reaction is a glycerophospholipid + a 1,2-diacyl-sn-glycerol = a monoacylglycerophospholipid + a triacyl-sn-glycerol. The enzyme catalyses a 1-acyl-sn-glycerol + a 1,2-diacyl-sn-glycero-3-phosphocholine = a 1-acyl-sn-glycero-3-phosphocholine + a 1,2-diacyl-sn-glycerol. It carries out the reaction 1,2-di-(9Z-octadecenoyl)-sn-glycero-3-phosphoethanolamine + 1,2-di-(9Z-octadecenoyl)-sn-glycerol = 1-(9Z-octadecenoyl)-sn-glycero-3-phosphoethanolamine + 1,2,3-tri-(9Z-octadecenoyl)-glycerol. It catalyses the reaction 1,2-di-(9Z-octadecenoyl)-sn-glycerol + 1,2-di-(9Z-octadecenoyl)-sn-glycero-3-phosphocholine = 1,2,3-tri-(9Z-octadecenoyl)-glycerol + 1-(9Z-octadecenoyl)-sn-glycero-3-phosphocholine. The catalysed reaction is 1-(9Z-octadecenoyl)-sn-glycerol + 1,2-di-(9Z-octadecenoyl)-sn-glycero-3-phosphocholine = di-(9Z)-octadecenoylglycerol + 1-(9Z-octadecenoyl)-sn-glycero-3-phosphocholine. The enzyme catalyses 2-(9Z-octadecenoyl)-glycerol + 1,2-di-(9Z-octadecenoyl)-sn-glycero-3-phosphocholine = 1,2-di-(9Z-octadecenoyl)-glycerol + 1-(9Z-octadecenoyl)-sn-glycero-3-phosphocholine. It carries out the reaction 1-(9Z-octadecenoyl)-2-hexadecanoyl-sn-glycero-3-phosphoethanolamine + 1,2-di-(9Z-octadecenoyl)-sn-glycerol = 1,2-di-(9Z)-octadecenoyl-3-hexadecanoyl-sn-glycerol + 1-(9Z-octadecenoyl)-sn-glycero-3-phosphoethanolamine. It catalyses the reaction 1-(9Z-octadecenoyl)-2-octadecanoyl-sn-glycero-3-phosphoethanolamine + 1,2-di-(9Z-octadecenoyl)-sn-glycerol = 1,2-di-(9Z)-octadecenoyl-3-octadecanoyl-sn-glycerol + 1-(9Z-octadecenoyl)-sn-glycero-3-phosphoethanolamine. The catalysed reaction is 1-(9Z)-octadecenoyl-2-(9Z,12Z)-octadecadienoyl-sn-glycero-3-phosphoethanolamine + 1,2-di-(9Z-octadecenoyl)-sn-glycerol = 1,2-di-(9Z)-octadecenoyl-3-(9Z,12Z)-octadecadienoyl-sn-glycerol + 1-(9Z-octadecenoyl)-sn-glycero-3-phosphoethanolamine. Functionally, catalyzes triacylglycerol (TAG) formation by an acyl-CoA independent pathway. The enzyme specifically transfers acyl groups from the sn-2 position of a phospholipid to diacylglycerol (DAG), thus forming an sn-1-lysophospholipid. The preferred acyl donors are phosphatidylethanolamine (PE) and phosphatidylcholine (PC). Also capable of using broad acyl donors such as phosphatidic acid (PA), phosphatidylserine (PS), phosphatidylglycerol (PG) and phosphatidylinositol (PI), as well as monogalactosyldiacylglycerol (MGDG), digalactosyldiacylglycerol (DGDG), and acyl-CoA, and it is more likely to use unsaturated acyl donors. As acyl acceptors, it prefers 1,2- over 1,3-diacylglycerol (DAG). Additionally, has esterification activity that can utilize methanol as acyl acceptor to generate fatty acid methyl esters (FAME). Can also utilize ceramide instead of DAG, acylating the ceramides by attaching a fatty acid to the hydroxy group on the first carbon atom of the long-chain base to produce 1-O-acylceramides. Involved in lipid particle synthesis from the endoplasmic reticulum, promoting localized TAG production at discrete ER subdomains. Relocates from the endoplasmic reticulum to a subdomain of the inner nuclear membrane upon nutrient starvation, where it provides a site of TAG synthesis, which is coupled with nuclear membrane remodeling. The sequence is that of Phospholipid:diacylglycerol acyltransferase from Saccharomyces cerevisiae (strain ATCC 204508 / S288c) (Baker's yeast).